We begin with the raw amino-acid sequence, 390 residues long: Levoglucosan dehydrogenase (390 aa).

NADH-binding residues include Phe-13, Met-14, Glu-43, Thr-81, Asn-83, His-86, Glu-103, Lys-104, Ala-130, and Asn-132. Lys-104 contributes to the levoglucosan binding site. Tyr-133 and Gln-163 together coordinate levoglucosan. The NADH site is built by Trp-175 and Arg-176. The levoglucosan site is built by Arg-176, Asp-189, and His-193. Residue Tyr-335 coordinates NADH.

Belongs to the Gfo/Idh/MocA family. In terms of assembly, homotetramer.

The catalysed reaction is levoglucosan + NAD(+) = 3-dehydrolevoglucosan + NADH + H(+). In terms of biological role, catalyzes the oxidation of levoglucosan (1,6-anhydro-beta-D-glucose, LG) to 3-dehydrolevoglucosan (3-keto-LG). Exhibits high substrate specificity toward levoglucosan and NAD(+) for the oxidative reaction. Exhibits weak activities (about 4% compared with that of LG) toward L-sorbose and 1,5-anhydro-D-glucitol, and activity toward D-xylose is also detectable (1.7%). Can also efficiently catalyzes the NADH-dependent reduction (reverse reaction) of 3-keto-LG. This chain is Levoglucosan dehydrogenase, found in Pseudarthrobacter phenanthrenivorans (strain DSM 18606 / JCM 16027 / LMG 23796 / Sphe3) (Arthrobacter phenanthrenivorans).